Consider the following 441-residue polypeptide: Glutamate-1-semialdehyde 2,1-aminomutase (441 aa).

At lysine 273 the chain carries N6-(pyridoxal phosphate)lysine.

Belongs to the class-III pyridoxal-phosphate-dependent aminotransferase family. HemL subfamily. Pyridoxal 5'-phosphate serves as cofactor.

The protein resides in the cytoplasm. It carries out the reaction (S)-4-amino-5-oxopentanoate = 5-aminolevulinate. Its pathway is porphyrin-containing compound metabolism; protoporphyrin-IX biosynthesis; 5-aminolevulinate from L-glutamyl-tRNA(Glu): step 2/2. In Pyrobaculum calidifontis (strain DSM 21063 / JCM 11548 / VA1), this protein is Glutamate-1-semialdehyde 2,1-aminomutase.